Reading from the N-terminus, the 76-residue chain is Bowman-Birk type proteinase inhibitor DE-4 (76 aa).

Intrachain disulfides connect cysteine 15-cysteine 69, cysteine 16-cysteine 31, cysteine 19-cysteine 65, cysteine 21-cysteine 29, cysteine 39-cysteine 46, cysteine 43-cysteine 58, and cysteine 48-cysteine 56.

Belongs to the Bowman-Birk serine protease inhibitor family.

The polypeptide is Bowman-Birk type proteinase inhibitor DE-4 (Macrotyloma axillare (Perennial horse gram)).